A 1672-amino-acid chain; its full sequence is Probable outer membrane protein PmpB (1672 aa).

An N-terminal signal peptide occupies residues 1–14 (MSSMKWLSATAVFA). 4 disordered regions span residues 69 to 122 (IPVK…GGAF), 203 to 263 (NTAE…GSGG), 384 to 415 (EAQT…AKGG), and 734 to 765 (STGV…PAPA). Low complexity-rich tracts occupy residues 77 to 88 (DDSSTSTPTTSS), 100 to 111 (SSSSSPNSGDTS), and 203 to 234 (NTAE…SKVQ). 2 stretches are compositionally biased toward polar residues: residues 235-256 (SLFT…QTPS) and 384-399 (EAQT…SQSG). The span at 734 to 744 (STGVATTATTS) shows a compositional bias: low complexity. An Autotransporter domain is found at 1379–1672 (DDAAYNNFWV…MTSCGARMIF (294 aa)).

This sequence belongs to the PMP outer membrane protein family.

The protein resides in the secreted. Its subcellular location is the cell wall. It is found in the cell outer membrane. The sequence is that of Probable outer membrane protein PmpB (pmpB) from Chlamydia muridarum (strain MoPn / Nigg).